The following is a 290-amino-acid chain: RxLR effector protein Avr4 (290 aa).

An N-terminal signal peptide occupies residues 1 to 24; that stretch reads MRSLHILLVITASLLASLAVSAEA. Residues 33 to 56 form a disordered region; that stretch reads VVENNKDKSRFLRDGGTTEAQTDE. Residues 36–45 are compositionally biased toward basic and acidic residues; sequence NNKDKSRFLR. A RxLR-dEER motif is present at residues 42-58; the sequence is RFLRDGGTTEAQTDEER. A W1 motif region spans residues 118 to 141; it reads KYERMQWQKLNEGQTLTYMRVGDR. A W2 motif region spans residues 151–174; the sequence is QLLRWVAQKKTVKSVYDDLQIEGF. Residues 224-247 form a W3 motif region; the sequence is VFEKWAMEGTHIKSVIKTLNLNNK. N246 is a glycosylation site (N-linked (GlcNAc...) asparagine). The interval 249 to 270 is y motif; sequence ASEMANNENFPALLKYVKLYLD.

The protein belongs to the RxLR effector family.

The protein localises to the secreted. The protein resides in the host cytoplasm. It is found in the host nucleus. It localises to the host nucleolus. Its subcellular location is the host cytoskeleton. Its function is as follows. Secreted effector that acts as an elicitor of hypersensitive response (HR) specifically on plants carrying defense protein R4, through its interaction with this protein. In Phytophthora mirabilis, this protein is RxLR effector protein Avr4.